Here is a 259-residue protein sequence, read N- to C-terminus: MAVISMKQLLEAGVHFGHQTRRWNPKMAKYIFTERNGIHVIDLQQTVKYADQAYDFMRDAAANDAVVLFVGTKKQAADAVAEEAVRSGQYFINHRWLGGTLTNWGTIQKRIARLKEIKRMEEDGTFEVLPKKEVALLNKQRARLEKFLGGIEDMPRIPDVMYVVDPHKEQIAVKEAKKLGIPVVAMVDTNTDPDDIDVIIPANDDAIRAVKLITAKLADAIIEGRQGEDAVAVEAEFAASETQADSIEEIVEVVEGDNK.

The protein belongs to the universal ribosomal protein uS2 family.

In Streptococcus pneumoniae serotype 2 (strain D39 / NCTC 7466), this protein is Small ribosomal subunit protein uS2.